The following is a 235-amino-acid chain: Transmembrane protein 182 (235 aa).

The N-terminal stretch at 1–33 (MKLSIGIFFGGLFGALGILIYLVAFGSDYWLLA) is a signal peptide. The Extracellular segment spans residues 34-122 (KEIEKCSENQ…SALVYRGFWN (89 aa)). Residues Asn-48, Asn-90, and Asn-107 are each glycosylated (N-linked (GlcNAc...) asparagine). The helical transmembrane segment at 123 to 143 (IFMLLGVVTAVIGGFLIICAA) threads the bilayer. Residues 144–155 (PFTNHRIYKAGG) are Cytoplasmic-facing. Residues 156–176 (GLFITSGILFALVVVMHVFWV) form a helical membrane-spanning segment. The Extracellular segment spans residues 177–205 (QSVSDIKGYTDTRQQDCSQFTVYVSFGWS). The helical transmembrane segment at 206–226 (FMLAPFGIFFCLFAGMLFLLV) threads the bilayer. At 227 to 235 (GHTIHVHTK) the chain is on the cytoplasmic side.

This sequence belongs to the TMEM182 family.

It is found in the cell membrane. In terms of biological role, may negatively regulate myogenesis and skeletal muscle regeneration. The protein is Transmembrane protein 182 (tmem182) of Xenopus tropicalis (Western clawed frog).